Reading from the N-terminus, the 137-residue chain is Pro-corazonin (137 aa).

The N-terminal stretch at 1 to 20 (MKHVFSTSLIVSLFVIFTDA) is a signal peptide. Residue Q21 is modified to Pyrrolidone carboxylic acid. At N31 the chain carries Asparagine amide. The propeptide occupies 68-137 (FLKSPCDVRL…RLLNDGMHRL (70 aa)).

It belongs to the corazonin family.

Its subcellular location is the secreted. Functionally, cardioactive peptide. Corazonin is probably involved in the physiological regulation of the heart beat. The chain is Pro-corazonin from Aedes aegypti (Yellowfever mosquito).